A 235-amino-acid chain; its full sequence is Chaperone protein TorD (235 aa).

It belongs to the TorD/DmsD family. TorD subfamily.

Its subcellular location is the cytoplasm. Involved in the biogenesis of TorA. Acts on TorA before the insertion of the molybdenum cofactor and, as a result, probably favors a conformation of the apoenzyme that is competent for acquiring the cofactor. The chain is Chaperone protein TorD from Shewanella amazonensis (strain ATCC BAA-1098 / SB2B).